The primary structure comprises 319 residues: tRNA dimethylallyltransferase (319 aa).

Gly15 to Ser22 provides a ligand contact to ATP. A substrate-binding site is contributed by Thr17–Ser22. Interaction with substrate tRNA regions lie at residues Asp40–Gln43 and Gln164–Arg168.

Belongs to the IPP transferase family. As to quaternary structure, monomer. It depends on Mg(2+) as a cofactor.

The catalysed reaction is adenosine(37) in tRNA + dimethylallyl diphosphate = N(6)-dimethylallyladenosine(37) in tRNA + diphosphate. In terms of biological role, catalyzes the transfer of a dimethylallyl group onto the adenine at position 37 in tRNAs that read codons beginning with uridine, leading to the formation of N6-(dimethylallyl)adenosine (i(6)A). The protein is tRNA dimethylallyltransferase of Chlorobium phaeobacteroides (strain DSM 266 / SMG 266 / 2430).